A 255-amino-acid polypeptide reads, in one-letter code: MSMEDPFFVVKGEVQKAVNTAQGLFQRWTELLQGPSAATREEIDWTTNELRNNLRSIEWDLEDLDETISIVEANPRKFNLDATELSIRKAFITSTRQIVRDMKDQMSASSVQALAERKNRQALLGDSSSQSWNAGVADRYGRLDRELQLANSHFIEEQQAQQQLIVEQQDEQLELVSGSIGVLKNMSQRIGGELEEQAVMLDDFSHELESTQSRLDNVMKKLAKVSHMTSDRRQWCAIAILFAVLVVVLILFLVL.

At serine 2 the chain carries N-acetylserine. Serine 2 is subject to Phosphoserine. Residues 2-168 form a required for interaction with VPS51 region; that stretch reads SMEDPFFVVK…QAQQQLIVEQ (167 aa). The Cytoplasmic segment spans residues 2–234; the sequence is SMEDPFFVVK…VSHMTSDRRQ (233 aa). The stretch at 41–74 forms a coiled coil; sequence EEIDWTTNELRNNLRSIEWDLEDLDETISIVEAN. Phosphoserine is present on residues serine 129 and serine 152. The 63-residue stretch at 163–225 folds into the t-SNARE coiled-coil homology domain; that stretch reads QLIVEQQDEQ…DNVMKKLAKV (63 aa). Residues 235–255 traverse the membrane as a helical; Anchor for type IV membrane protein segment; that stretch reads WCAIAILFAVLVVVLILFLVL.

Belongs to the syntaxin family. As to quaternary structure, identified in a complex containing STX6, STX12 and VAMP4. This complex also includes VTI1A. Binds EEA1. Interacts with VPS45A and GOPC. Interacts with MARCHF2; the interaction promotes MARCHF2-mediated ubiquitination and degradation of CFTR. Interacts with MARCHF3. Interacts with BLTP3B (via C-terminal coiled-coil domain). Interacts with BAIAP3; this interaction is increased in the presence of calcium. Interacts with VPS13B.

The protein resides in the golgi apparatus membrane. It localises to the golgi apparatus. Its subcellular location is the trans-Golgi network membrane. The protein localises to the recycling endosome membrane. In terms of biological role, SNARE promoting movement of transport vesicles to target membranes. Targets endosomes to the trans-Golgi network, and may therefore function in retrograde trafficking. Together with SNARE STX12, promotes movement of vesicles from endosomes to the cell membrane, and may therefore function in the endocytic recycling pathway. The polypeptide is Syntaxin-6 (Stx6) (Mus musculus (Mouse)).